The chain runs to 96 residues: Teretoxin Tgu6.1 (96 aa).

An N-terminal signal peptide occupies residues 1-16; sequence MRPFLVFVLIVSVSLA. The propeptide occupies 17–52; sequence FSFEDMPNKGGDSVASITADQARGHKRNPLFPFAQR.

Post-translationally, contains 3 disulfide bonds. In terms of tissue distribution, expressed by the venom duct.

Its subcellular location is the secreted. In terms of biological role, the recombinant protein causes paralysis to polychaete worms (Nereis virens), the natural prey of terebrid snails. This chain is Teretoxin Tgu6.1, found in Terebra guttata (White spotted auger snail).